Here is a 226-residue protein sequence, read N- to C-terminus: PKHD-type hydroxylase Abu_0724 (226 aa).

A Fe2OG dioxygenase domain is found at 78 to 178; it reads HIISPFFNKY…RMVSFMWIQS (101 aa). The Fe cation site is built by H96, D98, and H159. 2-oxoglutarate is bound at residue R169.

Fe(2+) serves as cofactor. L-ascorbate is required as a cofactor.

The chain is PKHD-type hydroxylase Abu_0724 from Aliarcobacter butzleri (strain RM4018) (Arcobacter butzleri).